The sequence spans 73 residues: uncharacterized protein (73 aa).

Transmembrane regions (helical) follow at residues 4-24 and 51-71; these read LIPV…SPCV and AGAI…IIAL.

Its subcellular location is the cell membrane. This is an uncharacterized protein from Escherichia coli O157:H7.